The sequence spans 102 residues: Small ribosomal subunit protein uS10 (102 aa).

The protein belongs to the universal ribosomal protein uS10 family. In terms of assembly, part of the 30S ribosomal subunit.

In terms of biological role, involved in the binding of tRNA to the ribosomes. The sequence is that of Small ribosomal subunit protein uS10 from Streptococcus pneumoniae (strain Taiwan19F-14).